Reading from the N-terminus, the 158-residue chain is Style cell-cycle inhibitor 1-B (158 aa).

Composition is skewed to basic and acidic residues over residues 1–11 and 22–47; these read MGSDKKTTEEK and PRDE…DKSK. The segment at 1–88 is disordered; it reads MGSDKKTTEE…DKSKNKFEEL (88 aa). 2 stretches are compositionally biased toward basic residues: residues 48 to 58 and 67 to 81; these read KEKHKSHKSKC and GEKH…KDKS.

In terms of tissue distribution, specifically expressed in flowers pistils, especially in stigmas and styles. Barely detected in roots, stems, leaves, sepals, petals and stamen.

Its subcellular location is the nucleus. Component of the auxin signaling transduction pathway that regulates cell proliferation and differentiation during flowers stigmas and styles development. Involved in the regulation of auxin-related genes. The polypeptide is Style cell-cycle inhibitor 1-B (Nicotiana tabacum (Common tobacco)).